A 298-amino-acid chain; its full sequence is Probable porphobilinogen deaminase (298 aa).

Position 241 is an S-(dipyrrolylmethanemethyl)cysteine (Cys-241).

The protein belongs to the HMBS family. Dipyrromethane is required as a cofactor.

The enzyme catalyses 4 porphobilinogen + H2O = hydroxymethylbilane + 4 NH4(+). It participates in porphyrin-containing compound metabolism; protoporphyrin-IX biosynthesis; coproporphyrinogen-III from 5-aminolevulinate: step 2/4. Functionally, tetrapolymerization of the monopyrrole PBG into the hydroxymethylbilane pre-uroporphyrinogen in several discrete steps. This is Probable porphobilinogen deaminase from Methanopyrus kandleri (strain AV19 / DSM 6324 / JCM 9639 / NBRC 100938).